A 363-amino-acid chain; its full sequence is Ribonuclease P protein subunit p40 (363 aa).

Component of nuclear RNase P and RNase MRP ribonucleoproteins. RNase P consists of a catalytic RNA moiety and about 10 protein subunits; POP1, POP4, POP5, POP7, RPP14, RPP21, RPP25, RPP30, RPP38 and RPP40. Within the RNase P complex, POP1, POP7 and RPP25 form the 'finger' subcomplex, POP5, RPP14, RPP40 and homodimeric RPP30 form the 'palm' subcomplex, and RPP21, POP4 and RPP38 form the 'wrist' subcomplex. All subunits of the RNase P complex interact with the catalytic RNA. Several subunits of RNase P are also part of the RNase MRP complex. RNase MRP consists of a catalytic RNA moiety and about 8 protein subunits; POP1, POP7, RPP25, RPP30, RPP38, RPP40 and possibly also POP4 and POP5.

The protein resides in the nucleus. It is found in the nucleolus. Functionally, component of ribonuclease P, a ribonucleoprotein complex that generates mature tRNA molecules by cleaving their 5'-ends. Also a component of the MRP ribonuclease complex, which cleaves pre-rRNA sequences. In Rattus norvegicus (Rat), this protein is Ribonuclease P protein subunit p40 (Rpp40).